A 129-amino-acid chain; its full sequence is MTVVGAVLPELKLYGDPTFIVSTALATRDFQDVHHDRDKAVAQGSKDIFVNILTDTGLVQRYVTDWAGPSALIKSIGLRLGVPWYAYDTVTFSGEVTAVNDGLITVKVVGRNTLGDHVTATVELSMRDS.

The protein belongs to the thioester dehydratase family. As to quaternary structure, heterodimer composed of ChsH1 and ChsH2. Two heterodimers combine to form a heterotetramer. The complex interacts with Ltp2 via the DUF35 C-terminal region of ChsH2. The ChsH1-ChsH2-Ltp2 protein complex is composed of two protomers that form a heterohexameric structure through the Ltp2 dimerization interface.

It carries out the reaction 3-oxochola-4,17-dien-22-oyl-CoA + H2O = 17-hydroxy-3-oxochol-4-en-22-oyl-CoA. It catalyses the reaction (2E)-octenoyl-CoA + H2O = 3-hydroxyoctanoyl-CoA. The enzyme catalyses (2E)-decenoyl-CoA + H2O = 3-hydroxydecanoyl-CoA. The protein operates within steroid metabolism; cholesterol degradation. With respect to regulation, in the absence of the Ltp2 aldolase, ChsH1/ChsH2 can hydrate only about 30% of the 3-OPDC-CoA substrate. Complete turnover requires the presence of Ltp2. In terms of biological role, involved in cholesterol side chain degradation. Catalyzes the hydration of 3-oxo-4,17-pregnadiene-20-carboxyl-CoA (3-OPDC-CoA) to form 17-hydroxy-3-oxo-4-pregnene-20-carboxyl-CoA (17-HOPC-CoA), in the modified beta-oxidation pathway for cholesterol side chain degradation. Can also use octenoyl-CoA and decenoyl-CoA, with lower efficiency. In Mycobacterium tuberculosis (strain ATCC 25618 / H37Rv), this protein is 3-oxo-4,17-pregnadiene-20-carboxyl-CoA hydratase beta subunit.